The primary structure comprises 475 residues: Bifunctional protein HldE (475 aa).

Residues 1 to 318 (MKVTLPDFER…ENAVRGRAET (318 aa)) form a ribokinase region. ATP is bound at residue 195-198 (NLSE). Asp-264 is a catalytic residue. The segment at 344 to 475 (MTNGVFDILH…NIIKKIQKNS (132 aa)) is cytidylyltransferase.

The protein in the N-terminal section; belongs to the carbohydrate kinase PfkB family. This sequence in the C-terminal section; belongs to the cytidylyltransferase family. Homodimer.

It catalyses the reaction D-glycero-beta-D-manno-heptose 7-phosphate + ATP = D-glycero-beta-D-manno-heptose 1,7-bisphosphate + ADP + H(+). The catalysed reaction is D-glycero-beta-D-manno-heptose 1-phosphate + ATP + H(+) = ADP-D-glycero-beta-D-manno-heptose + diphosphate. The protein operates within nucleotide-sugar biosynthesis; ADP-L-glycero-beta-D-manno-heptose biosynthesis; ADP-L-glycero-beta-D-manno-heptose from D-glycero-beta-D-manno-heptose 7-phosphate: step 1/4. Its pathway is nucleotide-sugar biosynthesis; ADP-L-glycero-beta-D-manno-heptose biosynthesis; ADP-L-glycero-beta-D-manno-heptose from D-glycero-beta-D-manno-heptose 7-phosphate: step 3/4. Its function is as follows. Catalyzes the phosphorylation of D-glycero-D-manno-heptose 7-phosphate at the C-1 position to selectively form D-glycero-beta-D-manno-heptose-1,7-bisphosphate. Functionally, catalyzes the ADP transfer from ATP to D-glycero-beta-D-manno-heptose 1-phosphate, yielding ADP-D-glycero-beta-D-manno-heptose. This is Bifunctional protein HldE from Cronobacter sakazakii (strain ATCC BAA-894) (Enterobacter sakazakii).